A 233-amino-acid chain; its full sequence is Orotidine 5'-phosphate decarboxylase (233 aa).

Substrate-binding positions include aspartate 10, lysine 32, aspartate 59–threonine 68, threonine 119, arginine 180, glutamine 189, glycine 209, and arginine 210. Lysine 61 acts as the Proton donor in catalysis.

The protein belongs to the OMP decarboxylase family. Type 1 subfamily. Homodimer.

The enzyme catalyses orotidine 5'-phosphate + H(+) = UMP + CO2. It participates in pyrimidine metabolism; UMP biosynthesis via de novo pathway; UMP from orotate: step 2/2. Catalyzes the decarboxylation of orotidine 5'-monophosphate (OMP) to uridine 5'-monophosphate (UMP). The chain is Orotidine 5'-phosphate decarboxylase from Pasteurella multocida (strain Pm70).